A 421-amino-acid polypeptide reads, in one-letter code: Zinc metalloproteinase-disintegrin-like lachestatin-2 (421 aa).

In terms of domain architecture, Peptidase M12B spans K10–P206. Cystine bridges form between C121–C201, C161–C185, and C163–C168. A Zn(2+)-binding site is contributed by H146. E147 is an active-site residue. Zn(2+)-binding residues include H150 and H156. The Disintegrin domain occupies P214–N299. 6 residues coordinate Ca(2+): V216, N219, F221, E223, E226, and D229. Disulfide bonds link C217–C246, C228–C241, C230–C236, C240–C263, C254–C260, C259–C285, C272–C292, C279–C310, C303–C315, C322–C372, C337–C383, C350–C360, C367–C409, and C403–C414. Residues E278–D280 carry the D/ECD-tripeptide motif. Ca(2+)-binding residues include D280, M281, D283, D294, and R295. N312 is a glycosylation site (N-linked (GlcNAc...) asparagine).

This sequence belongs to the venom metalloproteinase (M12B) family. P-III subfamily. P-IIIc sub-subfamily. In terms of assembly, homodimer; disulfide-linked. It depends on Zn(2+) as a cofactor. As to expression, expressed by the venom gland.

It localises to the secreted. Its function is as follows. Snake venom zinc metalloprotease that induces apoptosis in vascular endothelial cells (VEC), without degrading the extracellular matrix (it cannot cleave collagen) or inhibiting adhesion of VEC. Has also fibrinogenolytic and hemorrhagic activities. This chain is Zinc metalloproteinase-disintegrin-like lachestatin-2, found in Lachesis muta rhombeata (Bushmaster).